The primary structure comprises 379 residues: MLYWLLYEKAFLLHNFTPFRIFRYLTFRTAFASLTALFMGLIIGPAVVRRLREFQIGQYIREEGPKSHQKKSGTPTMGGVLITIAIIVPTLLWADLSNKFVWIAMLATIAFGAIGFTDDYLKVANRRNLGLTARAKMGLQILVAILVAISLVLVQRHGHYNTHLIVPFIKSFHPDLEISKLATYPHIWIIAYIPFLAFVAIVLVGSSNAVNLTDGLDGLAIGCTVIAAGALTVLTYVSGHAQFADYLGLSRMPEVGELSIFCGAMVGSAIGFLWYNAHPAEVFMGDVGSLALGGAIGTVAVIIKQELLLPFIGGVFVLEALSVILQVGSYKLRKKRIFKMAPLHHHFELLGWSESKIIVRFWIASLVFALFALTTLKLR.

Transmembrane regions (helical) follow at residues 27–47 (FRTA…GPAV), 76–96 (TMGG…WADL), 100–120 (FVWI…TDDY), 135–155 (AKMG…VLVQ), 185–205 (PHIW…VLVG), 218–238 (GLAI…TYVS), 255–275 (VGEL…FLWY), 283–303 (FMGD…AVII), 307–327 (LLLP…ILQV), and 356–376 (KIIV…LTTL).

The protein belongs to the glycosyltransferase 4 family. MraY subfamily. Requires Mg(2+) as cofactor.

It is found in the cell inner membrane. The enzyme catalyses UDP-N-acetyl-alpha-D-muramoyl-L-alanyl-gamma-D-glutamyl-meso-2,6-diaminopimeloyl-D-alanyl-D-alanine + di-trans,octa-cis-undecaprenyl phosphate = di-trans,octa-cis-undecaprenyl diphospho-N-acetyl-alpha-D-muramoyl-L-alanyl-D-glutamyl-meso-2,6-diaminopimeloyl-D-alanyl-D-alanine + UMP. It functions in the pathway cell wall biogenesis; peptidoglycan biosynthesis. Functionally, catalyzes the initial step of the lipid cycle reactions in the biosynthesis of the cell wall peptidoglycan: transfers peptidoglycan precursor phospho-MurNAc-pentapeptide from UDP-MurNAc-pentapeptide onto the lipid carrier undecaprenyl phosphate, yielding undecaprenyl-pyrophosphoryl-MurNAc-pentapeptide, known as lipid I. The polypeptide is Phospho-N-acetylmuramoyl-pentapeptide-transferase (Koribacter versatilis (strain Ellin345)).